The primary structure comprises 268 residues: Thiazole synthase (268 aa).

Lys96 (schiff-base intermediate with DXP) is an active-site residue. Residues Gly157, 185–186 (AG), and 207–208 (NT) contribute to the 1-deoxy-D-xylulose 5-phosphate site. Residues 238–268 (PMRPREAASPSSPVEGVPFTPTGPRPGRGPQ) are disordered. A compositionally biased stretch (pro residues) spans 258–268 (PTGPRPGRGPQ).

This sequence belongs to the ThiG family. As to quaternary structure, homotetramer. Forms heterodimers with either ThiH or ThiS.

Its subcellular location is the cytoplasm. The enzyme catalyses [ThiS sulfur-carrier protein]-C-terminal-Gly-aminoethanethioate + 2-iminoacetate + 1-deoxy-D-xylulose 5-phosphate = [ThiS sulfur-carrier protein]-C-terminal Gly-Gly + 2-[(2R,5Z)-2-carboxy-4-methylthiazol-5(2H)-ylidene]ethyl phosphate + 2 H2O + H(+). It participates in cofactor biosynthesis; thiamine diphosphate biosynthesis. Functionally, catalyzes the rearrangement of 1-deoxy-D-xylulose 5-phosphate (DXP) to produce the thiazole phosphate moiety of thiamine. Sulfur is provided by the thiocarboxylate moiety of the carrier protein ThiS. In vitro, sulfur can be provided by H(2)S. The polypeptide is Thiazole synthase (Thermus thermophilus (strain ATCC BAA-163 / DSM 7039 / HB27)).